A 201-amino-acid chain; its full sequence is Putative manganese efflux pump MntP (201 aa).

5 helical membrane passes run 6-26, 39-59, 105-125, 127-147, and 169-189; these read CLAVAVALAMDAFAVAIATGI, LAFHFGLFQALMPVAGWTLGL, LTLIMLAVATSIDALAVGLSL, VLGIDIVTPAIVIGVVCLLFT, and LAGGVVLIGIGLRILYEHGVF.

The protein belongs to the MntP (TC 9.B.29) family.

The protein localises to the cell inner membrane. Its function is as follows. Probably functions as a manganese efflux pump. This is Putative manganese efflux pump MntP from Nitratidesulfovibrio vulgaris (strain ATCC 29579 / DSM 644 / CCUG 34227 / NCIMB 8303 / VKM B-1760 / Hildenborough) (Desulfovibrio vulgaris).